The sequence spans 482 residues: Arginine/ornithine antiporter (482 aa).

The Cytoplasmic portion of the chain corresponds to 1 to 10 (MSQESSQKLR). The chain crosses the membrane as a helical span at residues 11–31 (LGALTALVVGSMIGGGIFSLP). At 32–40 (QNMAASADV) the chain is on the periplasmic side. The chain crosses the membrane as a helical span at residues 41-61 (GAVLIGWAITAVGMLTLAFVF). Residues 62–100 (QTLANRKPELDGGVYAYAKAGFGDYMGFSSAWGYWISAW) are Cytoplasmic-facing. Residues 101-121 (LGNVGYFVLLFSTLGYFFPIF) traverse the membrane as a helical segment. At 122 to 124 (GKG) the chain is on the periplasmic side. A helical transmembrane segment spans residues 125 to 145 (DTVAAIVCASVLLWALHFLVL). Over 146-156 (RGIKEAAFINT) the chain is Cytoplasmic. The chain crosses the membrane as a helical span at residues 157–177 (VTTVAKVVPLFLFILICLFAF). Residues 178–202 (KLDIFTADIWGKSNPDLGSVMNQVR) lie on the Periplasmic side of the membrane. A helical transmembrane segment spans residues 203 to 223 (NMMLVTVWVFIGIEGASIFSS). At 224–235 (RAEKRSDVGKAT) the chain is on the cytoplasmic side. The helical transmembrane segment at 236-256 (VIGFITVLLLLVLVNVLSMGV) threads the bilayer. The Periplasmic portion of the chain corresponds to 257–283 (MTQPELAKLQNPSMALVLEHVVGHWGA). Residues 284–304 (VLISVGLLISLLGALLSWVLL) traverse the membrane as a helical segment. The Cytoplasmic portion of the chain corresponds to 305-333 (CAEIMFAAAKDHTMPEFLRRENANQVPAN). Residues 334–354 (ALWLTNICVQVFLVVVFFTSG) traverse the membrane as a helical segment. Residues 355-365 (DPDGMDPYTKM) are Periplasmic-facing. A helical transmembrane segment spans residues 366–386 (LLLATSMILIPYFWSAAYGLL). The Cytoplasmic portion of the chain corresponds to 387–403 (LTLKGETYENDARERSK). Residues 404–424 (DLVIAGIAVAYAVWLLYAGGL) traverse the membrane as a helical segment. Position 425 (lysine 425) is a topological domain, periplasmic. A helical transmembrane segment spans residues 426–446 (YLLLSALLYAPGAILFAKAKH). The Cytoplasmic segment spans residues 447-458 (EVGQPIFTGIEK). A helical membrane pass occupies residues 459–479 (LIFAAVVIGALVAAYGLYDGF). The Periplasmic segment spans residues 480–482 (LTL).

Belongs to the amino acid-polyamine-organocation (APC) superfamily. Basic amino acid/polyamine antiporter (APA) (TC 2.A.3.2) family.

Its subcellular location is the cell inner membrane. The enzyme catalyses L-ornithine(in) + L-arginine(out) = L-ornithine(out) + L-arginine(in). Catalyzes electroneutral exchange between arginine and ornithine to allow high-efficiency energy conversion in the arginine deiminase pathway. Also mediates the proton motive force-driven uptake of arginine and ornithine, but the exchange is several orders of magnitude faster than the proton motive force-driven transport. This is Arginine/ornithine antiporter from Pseudomonas aeruginosa (strain ATCC 15692 / DSM 22644 / CIP 104116 / JCM 14847 / LMG 12228 / 1C / PRS 101 / PAO1).